The primary structure comprises 382 residues: Galactokinase (382 aa).

Position 34-37 (34-37 (EHTD)) interacts with substrate. 124 to 130 (GAGLSSS) provides a ligand contact to ATP. Residues serine 130 and glutamate 162 each contribute to the Mg(2+) site. Aspartate 174 serves as the catalytic Proton acceptor. Position 223 (tyrosine 223) interacts with substrate.

It belongs to the GHMP kinase family. GalK subfamily.

Its subcellular location is the cytoplasm. It carries out the reaction alpha-D-galactose + ATP = alpha-D-galactose 1-phosphate + ADP + H(+). It participates in carbohydrate metabolism; galactose metabolism. Catalyzes the transfer of the gamma-phosphate of ATP to D-galactose to form alpha-D-galactose-1-phosphate (Gal-1-P). The sequence is that of Galactokinase from Escherichia coli O1:K1 / APEC.